Reading from the N-terminus, the 191-residue chain is dITP/XTP pyrophosphatase (191 aa).

8–13 contacts substrate; that stretch reads SKNQGK. Mg(2+) is bound by residues E38 and D67. The Proton acceptor role is filled by D67. Residues S68, 146–149, K169, and 174–175 contribute to the substrate site; these read FGYD and HR.

It belongs to the HAM1 NTPase family. Homodimer. It depends on Mg(2+) as a cofactor.

The catalysed reaction is XTP + H2O = XMP + diphosphate + H(+). It carries out the reaction dITP + H2O = dIMP + diphosphate + H(+). The enzyme catalyses ITP + H2O = IMP + diphosphate + H(+). In terms of biological role, pyrophosphatase that catalyzes the hydrolysis of nucleoside triphosphates to their monophosphate derivatives, with a high preference for the non-canonical purine nucleotides XTP (xanthosine triphosphate), dITP (deoxyinosine triphosphate) and ITP. Seems to function as a house-cleaning enzyme that removes non-canonical purine nucleotides from the nucleotide pool, thus preventing their incorporation into DNA/RNA and avoiding chromosomal lesions. This Prochlorococcus marinus subsp. pastoris (strain CCMP1986 / NIES-2087 / MED4) protein is dITP/XTP pyrophosphatase.